We begin with the raw amino-acid sequence, 144 residues long: Superoxide dismutase [Mn], mitochondrial (144 aa).

Mn(2+)-binding residues include H10, H58, and D143.

This sequence belongs to the iron/manganese superoxide dismutase family. Homotetramer. Requires Mn(2+) as cofactor.

The protein localises to the mitochondrion matrix. It catalyses the reaction 2 superoxide + 2 H(+) = H2O2 + O2. Functionally, destroys superoxide anion radicals which are normally produced within the cells and which are toxic to biological systems. The chain is Superoxide dismutase [Mn], mitochondrial from Branchiostoma floridae (Florida lancelet).